Here is a 216-residue protein sequence, read N- to C-terminus: Small ribosomal subunit protein uS4 (216 aa).

The S4 RNA-binding domain occupies 111-175 (RRLQTQVLRL…SPLVSESHPE (65 aa)). The tract at residues 194–216 (VAEAKQAKEKPPERGGRKRRGRR) is disordered. Residues 198–208 (KQAKEKPPERG) show a composition bias toward basic and acidic residues.

The protein belongs to the universal ribosomal protein uS4 family. Part of the 30S ribosomal subunit. Contacts protein S5. The interaction surface between S4 and S5 is involved in control of translational fidelity.

In terms of biological role, one of the primary rRNA binding proteins, it binds directly to 16S rRNA where it nucleates assembly of the body of the 30S subunit. With S5 and S12 plays an important role in translational accuracy. The chain is Small ribosomal subunit protein uS4 from Methanosarcina barkeri (strain Fusaro / DSM 804).